The following is a 123-amino-acid chain: uncharacterized protein (123 aa).

To M.tuberculosis Rv0477.

This is an uncharacterized protein from Mycobacterium leprae (strain TN).